A 226-amino-acid polypeptide reads, in one-letter code: Late protein I226R (226 aa).

The first 16 residues, Met1–Gly16, serve as a signal peptide directing secretion. Residues Asn142 and Asn164 are each glycosylated (N-linked (GlcNAc...) asparagine; by host).

The protein belongs to the asfivirus I226R family.

Plays a role in the inhibition of host NF-kappa-B and IRF3 signaling pathways. Mechanistically, promotes the degradation of host IKBKG through enhancing its ubiquitination leading to inhibition of both pathways. This is Late protein I226R from African swine fever virus (isolate Tick/South Africa/Pretoriuskop Pr4/1996) (ASFV).